A 198-amino-acid chain; its full sequence is MRIGVIAIQGNVEEHVEAMKRALGGKGEVVTIKHSGIVPTCDAIVIPGGESTTLCRLAWREGIAQEIIEKARQGMPIWGTCAGLILLASRGDEEVTKTKQQLFGLMDITVNRNAFGRQIDSFEAPLAIAGFDEPFNAVFIRAPAIVSAGQNVKVLAKYDDFIVAARQQNLLVSAFHPELTDDLRFHWYFLEMVPGWKN.

Position 49-51 (49-51 (GES)) interacts with L-glutamine. The active-site Nucleophile is the Cys81. L-glutamine is bound by residues Arg112 and 140-141 (IR). Residues His176 and Glu178 each act as charge relay system in the active site.

It belongs to the glutaminase PdxT/SNO family. In the presence of PdxS, forms a dodecamer of heterodimers. Only shows activity in the heterodimer.

It carries out the reaction aldehydo-D-ribose 5-phosphate + D-glyceraldehyde 3-phosphate + L-glutamine = pyridoxal 5'-phosphate + L-glutamate + phosphate + 3 H2O + H(+). The catalysed reaction is L-glutamine + H2O = L-glutamate + NH4(+). Its pathway is cofactor biosynthesis; pyridoxal 5'-phosphate biosynthesis. Its function is as follows. Catalyzes the hydrolysis of glutamine to glutamate and ammonia as part of the biosynthesis of pyridoxal 5'-phosphate. The resulting ammonia molecule is channeled to the active site of PdxS. This Methanocella arvoryzae (strain DSM 22066 / NBRC 105507 / MRE50) protein is Pyridoxal 5'-phosphate synthase subunit PdxT.